Consider the following 372-residue polypeptide: Probable L-tyrosine/L-aspartate decarboxylase (372 aa).

An N6-(pyridoxal phosphate)lysine modification is found at K215.

The protein belongs to the group II decarboxylase family. MfnA subfamily. Requires pyridoxal 5'-phosphate as cofactor.

The catalysed reaction is L-tyrosine + H(+) = tyramine + CO2. It carries out the reaction L-aspartate + H(+) = beta-alanine + CO2. The protein operates within cofactor biosynthesis; methanofuran biosynthesis. It participates in cofactor biosynthesis; coenzyme A biosynthesis. Functionally, catalyzes the decarboxylation of L-tyrosine to produce tyramine for methanofuran biosynthesis. Can also catalyze the decarboxylation of L-aspartate to produce beta-alanine for coenzyme A (CoA) biosynthesis. In Methanopyrus kandleri (strain AV19 / DSM 6324 / JCM 9639 / NBRC 100938), this protein is Probable L-tyrosine/L-aspartate decarboxylase.